Reading from the N-terminus, the 459-residue chain is ATP synthase subunit beta (459 aa).

148–155 (GGAGVGKT) is a binding site for ATP.

It belongs to the ATPase alpha/beta chains family. As to quaternary structure, F-type ATPases have 2 components, CF(1) - the catalytic core - and CF(0) - the membrane proton channel. CF(1) has five subunits: alpha(3), beta(3), gamma(1), delta(1), epsilon(1). CF(0) has three main subunits: a(1), b(2) and c(9-12). The alpha and beta chains form an alternating ring which encloses part of the gamma chain. CF(1) is attached to CF(0) by a central stalk formed by the gamma and epsilon chains, while a peripheral stalk is formed by the delta and b chains.

Its subcellular location is the cell inner membrane. The catalysed reaction is ATP + H2O + 4 H(+)(in) = ADP + phosphate + 5 H(+)(out). In terms of biological role, produces ATP from ADP in the presence of a proton gradient across the membrane. The catalytic sites are hosted primarily by the beta subunits. This is ATP synthase subunit beta from Thioalkalivibrio sulfidiphilus (strain HL-EbGR7).